The chain runs to 543 residues: Chaperonin GroEL 2 (543 aa).

Residues 29-32 (TLGP), 86-90 (DGTTT), Gly-413, 478-480 (NAA), and Asp-494 each bind ATP.

It belongs to the chaperonin (HSP60) family. In terms of assembly, forms a cylinder of 14 subunits composed of two heptameric rings stacked back-to-back. Interacts with the co-chaperonin GroES.

The protein localises to the cytoplasm. It catalyses the reaction ATP + H2O + a folded polypeptide = ADP + phosphate + an unfolded polypeptide.. Functionally, together with its co-chaperonin GroES, plays an essential role in assisting protein folding. The GroEL-GroES system forms a nano-cage that allows encapsulation of the non-native substrate proteins and provides a physical environment optimized to promote and accelerate protein folding. The chain is Chaperonin GroEL 2 from Thermosynechococcus vestitus (strain NIES-2133 / IAM M-273 / BP-1).